We begin with the raw amino-acid sequence, 921 residues long: Probable dipeptidyl-aminopeptidase B (921 aa).

Residues 1–33 (MAGHTEENAQLLSTEQESVSRHSSDSAASTAST) form a disordered region. Over 1–109 (MAGHTEENAQ…NKSVDKKLRK (109 aa)) the chain is Cytoplasmic. A compositionally biased stretch (polar residues) spans 8 to 17 (NAQLLSTEQE). Residues 110-130 (LIWIVGGVFIGAWVLALFIFL) form a helical; Signal-anchor for type II membrane protein membrane-spanning segment. At 131–921 (GKQAYKHSSE…VPLQIDAAKV (791 aa)) the chain is on the vacuolar side. An N-linked (GlcNAc...) asparagine glycan is attached at Asn362. The Charge relay system role is filled by Ser768. Asn822 carries an N-linked (GlcNAc...) asparagine glycan. Catalysis depends on charge relay system residues Asp845 and His878.

The protein belongs to the peptidase S9B family.

It localises to the vacuole membrane. The enzyme catalyses Release of an N-terminal dipeptide, Xaa-Yaa-|-Zaa-, from a polypeptide, preferentially when Yaa is Pro, provided Zaa is neither Pro nor hydroxyproline.. Its function is as follows. Type IV dipeptidyl-peptidase which removes N-terminal dipeptides sequentially from polypeptides having unsubstituted N-termini provided that the penultimate residue is proline. This chain is Probable dipeptidyl-aminopeptidase B (dapB), found in Sclerotinia sclerotiorum (strain ATCC 18683 / 1980 / Ss-1) (White mold).